We begin with the raw amino-acid sequence, 249 residues long: MVSFDATEALAPYREGRGYGAILFDRERLRQADASLFSPQSWGDRARPVDAGGRGGAWFVDAPFGHSVLRQYLRGGMAARVSRDRYLWKGAGRTRSFAEFRLMRELIKRKLPVPRPLAACYLREGVGYRAALLMERLENVRSLADHAQVAGRGAPWEATGQLIARFHRAGLDHADLNAHNILFDAGGHGWLIDFDRGVLRIPATRWRERNLKRLHRSLLKLRGNRSREDVDKDYARLHRAYELAWGRGY.

The active site involves D175.

It belongs to the protein kinase superfamily. KdkA/RfaP family.

It localises to the cell inner membrane. It carries out the reaction an alpha-Kdo-(2-&gt;6)-lipid IVA + ATP = a 4-O-phospho-alpha-Kdo-(2-&gt;6)-lipid IVA + ADP + H(+). The protein operates within bacterial outer membrane biogenesis; LPS core biosynthesis. Catalyzes the ATP-dependent phosphorylation of the 3-deoxy-D-manno-octulosonic acid (Kdo) residue in Kdo-lipid IV(A) at the 4-OH position. The polypeptide is 3-deoxy-D-manno-octulosonic acid kinase (Xanthomonas euvesicatoria pv. vesicatoria (strain 85-10) (Xanthomonas campestris pv. vesicatoria)).